The chain runs to 206 residues: Small ribosomal subunit protein uS4 (206 aa).

Positions 96-156 (RRLDNVVYRM…DKSKNQSRIK (61 aa)) constitute an S4 RNA-binding domain.

The protein belongs to the universal ribosomal protein uS4 family. In terms of assembly, part of the 30S ribosomal subunit. Contacts protein S5. The interaction surface between S4 and S5 is involved in control of translational fidelity.

Functionally, one of the primary rRNA binding proteins, it binds directly to 16S rRNA where it nucleates assembly of the body of the 30S subunit. Its function is as follows. With S5 and S12 plays an important role in translational accuracy. The protein is Small ribosomal subunit protein uS4 of Buchnera aphidicola subsp. Schizaphis graminum (strain Sg).